The sequence spans 900 residues: 3'-5' exonuclease DinG (900 aa).

The 154-residue stretch at 8-161 (VVDLETTGNQ…DEDAATTAQL (154 aa)) folds into the Exonuclease domain. In terms of domain architecture, Helicase ATP-binding spans 241–496 (TLVTKELGLT…KSIDLLEQQR (256 aa)). 276 to 283 (APLGSGKS) contacts ATP. A DEAH box motif is present at residues 448–451 (DEAH). The Helicase C-terminal domain occupies 714 to 883 (YVIEYVSVVE…RYRQKKGDIK (170 aa)).

It belongs to the helicase family. DinG subfamily. Type 2 sub-subfamily.

Its function is as follows. 3'-5' exonuclease. In Staphylococcus saprophyticus subsp. saprophyticus (strain ATCC 15305 / DSM 20229 / NCIMB 8711 / NCTC 7292 / S-41), this protein is 3'-5' exonuclease DinG.